Here is a 951-residue protein sequence, read N- to C-terminus: Cadmium/zinc-transporting ATPase HMA2 (951 aa).

Topologically, residues 1 to 83 (MASKKMTKSY…VRVTGETNFK (83 aa)) are cytoplasmic. Positions 7 to 73 (TKSYFDVLGI…ALNQAQLEAN (67 aa)) constitute an HMA domain. A helical transmembrane segment spans residues 84–105 (NKWPSPFAVVSGILLLLSFFKY). At 106-108 (LYS) the chain is on the extracellular side. A helical transmembrane segment spans residues 109-128 (PFRWLAVAAVVAGIYPILAK). At 129–135 (AVASLAR) the chain is on the cytoplasmic side. Residues 136-156 (FRIDINILVVVTVGATIGMQD) traverse the membrane as a helical segment. Position 157 (tyrosine 157) is a topological domain, extracellular. Residues 158-178 (TEAAVVVFLFTIAEWLQSRAS) traverse the membrane as a helical segment. The Cytoplasmic segment spans residues 179–304 (YKASAVMQSL…KTETQRFIDK (126 aa)). The helical transmembrane segment at 305-327 (CSKYYTPAIILISICFVAIPFAL) threads the bilayer. Over 328–335 (KVHNLKHW) the chain is Extracellular. Residues 336–353 (VHLALVVLVSACPCGLIL) traverse the membrane as a helical segment. Topologically, residues 354-647 (STPVATFCAL…KLAKRAKRKV (294 aa)) are cytoplasmic. Aspartate 391 serves as the catalytic 4-aspartylphosphate intermediate. Aspartate 592 and aspartate 596 together coordinate Mg(2+). The helical transmembrane segment at 648–667 (VENVVISITMKGAILALAFA) threads the bilayer. At 668-671 (GHPL) the chain is on the extracellular side. Residues 672-691 (IWAAVLADVGTCLLVILNSM) traverse the membrane as a helical segment. Over 692-951 (LLLSDKHKTG…VGTLKEIVIE (260 aa)) the chain is Cytoplasmic. A compositionally biased stretch (basic and acidic residues) spans 841–851 (ELQQSCHDKPS). The tract at residues 841–866 (ELQQSCHDKPSGLDIGTGPKHEGSST) is disordered.

Belongs to the cation transport ATPase (P-type) (TC 3.A.3) family. Type IB subfamily. In terms of tissue distribution, predominantly expressed in the vascular tissues of roots, stems, and leaves. Also detected in developing anthers.

It is found in the cell membrane. The catalysed reaction is Zn(2+)(in) + ATP + H2O = Zn(2+)(out) + ADP + phosphate + H(+). The enzyme catalyses Cd(2+)(in) + ATP + H2O = Cd(2+)(out) + ADP + phosphate + H(+). Its function is as follows. Plays an important role in zinc transport and homeostasis. Could also be involved in cadmium detoxification. The chain is Cadmium/zinc-transporting ATPase HMA2 (HMA2) from Arabidopsis thaliana (Mouse-ear cress).